We begin with the raw amino-acid sequence, 309 residues long: Taste receptor type 2 member 46 (309 aa).

Methionine 1 is a topological domain (extracellular). The chain crosses the membrane as a helical span at residues 2-22 (ITFLPITFSILIVVIFFIGNF). At 23-46 (ANGFIALINSIEWVKRQKISFAGQ) the chain is on the cytoplasmic side. The helical transmembrane segment at 47–67 (ILTALAVSRVGLLWVLSLHWY) threads the bilayer. Topologically, residues 68-86 (ATEFNLAFHSVEVRSTAYN) are extracellular. The helical transmembrane segment at 87–107 (VWVVTNHFSNWLSTSLSMFYL) threads the bilayer. The Cytoplasmic portion of the chain corresponds to 108-126 (LRIATFSNLIFLHLNRRVK). A helical transmembrane segment spans residues 127-147 (SVILVTLLGPLLFLVCQLFVM). Over 148–178 (NMNQIVRTKEYEGNMTWKIKLKSAMYLSNTT) the chain is Extracellular. N-linked (GlcNAc...) asparagine glycosylation is found at asparagine 161 and asparagine 176. A helical membrane pass occupies residues 179 to 199 (VAMLANFVPLTLTLISFLLLI). Over 200–229 (CSLCKHLKKMRVHGKGSQDPSTKVHTKALQ) the chain is Cytoplasmic. Residues 230-250 (IVTSFLLVCAIYFLSIILSVW) form a helical membrane-spanning segment. The Extracellular segment spans residues 251-259 (NSGGLENKP). The helical transmembrane segment at 260-280 (FFMFCQAIKFSYPSTHPFILI) threads the bilayer. Residues 281-309 (WGNKTLKQTFLSVLRNVRYWVKGQKPSSP) lie on the Cytoplasmic side of the membrane.

The protein belongs to the G-protein coupled receptor T2R family.

The protein resides in the membrane. It localises to the cell projection. It is found in the cilium membrane. Functionally, receptor that may play a role in the perception of bitterness and is gustducin-linked. May play a role in sensing the chemical composition of the gastrointestinal content. The activity of this receptor may stimulate alpha gustducin, mediate PLC-beta-2 activation and lead to the gating of TRPM5. In airway epithelial cells, binding of bitter compounds increases the intracellular calcium ion concentration and stimulates ciliary beat frequency. This chain is Taste receptor type 2 member 46 (TAS2R46), found in Papio hamadryas (Hamadryas baboon).